The primary structure comprises 56 residues: Large ribosomal subunit protein bL32 (56 aa).

Residues 1 to 16 (MAVQKSKKSRSRRGMR) show a composition bias toward basic residues. The interval 1–38 (MAVQKSKKSRSRRGMRRSHDAVTPENLSVDPVSGETHR) is disordered.

The protein belongs to the bacterial ribosomal protein bL32 family.

The chain is Large ribosomal subunit protein bL32 from Colwellia psychrerythraea (strain 34H / ATCC BAA-681) (Vibrio psychroerythus).